A 504-amino-acid polypeptide reads, in one-letter code: MNIKPEEITSIIRQQIENFNTNIETIDSGTIIQIGDGIARVYGLEDCMEGELIEFPNDVYGMALNLEQDNVGCVLLGAEEGIKEGNVVKRTKKVVEVPVGEALVGRVVNSLGMPIDGKGPVLTTENRDVEVPAPGVIDRQSVKEPLQTGIKAIDSMIPIGKGQRELIIGDRQTGKTAIAMDTILNQKGKDVICIYVAIGQKQSTVAHIVNDLTKMGAMDYTIVVSSTASDSAPLQYLAPYAGCSMGEYFMHKGKDVLIVYDDLSKHAVAYRTMSLLLRRPPGREAYPGDVFYLHSRLLERSARLSEKLGGGSLTALPIVETLAGDVTAYIPTNVISITDGQIFLESELFNAGQRPAVNAGISVSRVGGNAQIKAMKQVAGTLRLELAQYRELAAFSQFGSDLDKESVKRLEKGKRLVEILKQPQYGPMPVEKEIIILYAAVNNHLIDIPVNKIKEFEKELFNYIDTHYRDIGKDILEHKQLTDELKSKLDKAINDFKNVFLSEI.

169 to 176 (GDRQTGKT) contributes to the ATP binding site.

This sequence belongs to the ATPase alpha/beta chains family. As to quaternary structure, F-type ATPases have 2 components, CF(1) - the catalytic core - and CF(0) - the membrane proton channel. CF(1) has five subunits: alpha(3), beta(3), gamma(1), delta(1), epsilon(1). CF(0) has three main subunits: a(1), b(2) and c(9-12). The alpha and beta chains form an alternating ring which encloses part of the gamma chain. CF(1) is attached to CF(0) by a central stalk formed by the gamma and epsilon chains, while a peripheral stalk is formed by the delta and b chains.

It is found in the cell membrane. It carries out the reaction ATP + H2O + 4 H(+)(in) = ADP + phosphate + 5 H(+)(out). In terms of biological role, produces ATP from ADP in the presence of a proton gradient across the membrane. The alpha chain is a regulatory subunit. In Clostridium botulinum (strain Langeland / NCTC 10281 / Type F), this protein is ATP synthase subunit alpha.